Here is a 344-residue protein sequence, read N- to C-terminus: Arylacetonitrilase (344 aa).

One can recognise a CN hydrolase domain in the interval 5 to 290; that stretch reads LRVAVTQAEP…EGIVYADLDL (286 aa). Glutamate 45 serves as the catalytic Proton acceptor. Residue lysine 126 is part of the active site. Residue cysteine 167 is the Nucleophile of the active site. The tract at residues 324-344 is disordered; that stretch reads VIPRDEEEPSRKANVVVPKQE.

It belongs to the carbon-nitrogen hydrolase superfamily. Nitrilase family.

The enzyme catalyses a nitrile + 2 H2O = a carboxylate + NH4(+). The catalysed reaction is 4-chlorophenylacetonitrile + 2 H2O = 4-chlorophenylacetate + NH4(+). Functionally, nitrilase that hydrolyzes preferentially phenylacetonitrile and (R,S)-mandelonitrile. Also acts on dinitriles like phenylenediacetonitriles (PDAs) 1,2-PDA, 1,3-PDA, and 1,4-PDA, and cyanophenyl acetonitriles (CPAs) 2-CPA and 4-CPA. This chain is Arylacetonitrilase, found in Macrophomina phaseolina (strain MS6) (Charcoal rot fungus).